The sequence spans 593 residues: ABC1 family protein lscO (593 aa).

Disordered stretches follow at residues 1–29 and 441–467; these read MDVA…GGKK and PYKN…EERK. 2 stretches are compositionally biased toward basic and acidic residues: residues 8–22 and 457–467; these read MERH…DDGT and QRTKETPEERK.

This sequence belongs to the protein kinase superfamily. ADCK protein kinase family.

In terms of biological role, ABC1 family protein; part of the gene cluster that mediates the biosynthesis of the lipopeptide antibiotics leucinostatins that show extensive biological activities, including antimalarial, antiviral, antibacterial, antifungal, and antitumor activities, as well as phytotoxic. The function of lcsO within the leucinostatins biosynthesis has not been identified yet. In Purpureocillium lilacinum (Paecilomyces lilacinus), this protein is ABC1 family protein lscO.